The following is an 891-amino-acid chain: DNA mismatch repair protein MutS (891 aa).

646-653 (GPNMAGKS) contacts ATP.

The protein belongs to the DNA mismatch repair MutS family.

This protein is involved in the repair of mismatches in DNA. It is possible that it carries out the mismatch recognition step. This protein has a weak ATPase activity. The polypeptide is DNA mismatch repair protein MutS (Rickettsia typhi (strain ATCC VR-144 / Wilmington)).